Reading from the N-terminus, the 781-residue chain is DNA replication helicase (781 aa).

Residue 64 to 71 participates in ATP binding; that stretch reads GTAGAGKS.

This sequence belongs to the herpesviridae helicase family. Associates with the primase and the primase-associated factor to form the helicase-primase complex.

It localises to the host nucleus. This protein may be a helicase and is required for replication of viral DNA. Its function is as follows. Component of the helicase/primase complex. Unwinds the DNA at the replication forks and generates single-stranded DNA for both leading and lagging strand synthesis. The primase synthesizes short RNA primers on the lagging strand that the polymerase elongates using dNTPs. Possesses helicase-like motifs and therefore may act as the helicase subunit of the complex. The sequence is that of DNA replication helicase from Saimiriine herpesvirus 2 (strain 11) (SaHV-2).